The chain runs to 749 residues: Chitin synthase G (749 aa).

A run of 5 helical transmembrane segments spans residues 40–60 (CVGE…PLPP), 73–93 (VLQW…WLFC), 421–441 (FMQN…ISII), 451–471 (PVGF…YFGI), and 483–503 (LMFI…IFTA). Positions 683-749 (IESGSGIPSG…RRYMQPEQMV (67 aa)) are disordered. Over residues 697-718 (LSSSVPQSGMQQSRAVPGNMSQ) the composition is skewed to polar residues. Residue Asn715 is glycosylated (N-linked (GlcNAc...) asparagine). A compositionally biased stretch (basic residues) spans 728–742 (YTKRPSRIPRQKRRY).

It belongs to the chitin synthase family. Class VI subfamily.

It is found in the cell membrane. The catalysed reaction is [(1-&gt;4)-N-acetyl-beta-D-glucosaminyl](n) + UDP-N-acetyl-alpha-D-glucosamine = [(1-&gt;4)-N-acetyl-beta-D-glucosaminyl](n+1) + UDP + H(+). Functionally, polymerizes chitin, a structural polymer of the cell wall and septum, by transferring the sugar moiety of UDP-GlcNAc to the non-reducing end of the growing chitin polymer. Plays an important role in septal growth or maintenance. Mediates colony spore formation. This is Chitin synthase G from Aspergillus niger (strain ATCC MYA-4892 / CBS 513.88 / FGSC A1513).